The chain runs to 381 residues: DNA primase DnaG (381 aa).

Positions 173–259 constitute a Toprim domain; that stretch reads DAILVVEGRS…EVEDLEKDEI (87 aa). Residues glutamate 179, aspartate 221, and aspartate 223 each coordinate Mg(2+).

The protein belongs to the archaeal DnaG primase family. Forms a ternary complex with MCM helicase and DNA. Component of the archaeal exosome complex. Mg(2+) is required as a cofactor.

It carries out the reaction ssDNA + n NTP = ssDNA/pppN(pN)n-1 hybrid + (n-1) diphosphate.. Its function is as follows. RNA polymerase that catalyzes the synthesis of short RNA molecules used as primers for DNA polymerase during DNA replication. Also part of the exosome, which is a complex involved in RNA degradation. Acts as a poly(A)-binding protein that enhances the interaction between heteromeric, adenine-rich transcripts and the exosome. The polypeptide is DNA primase DnaG (Methanothermobacter thermautotrophicus (strain ATCC 29096 / DSM 1053 / JCM 10044 / NBRC 100330 / Delta H) (Methanobacterium thermoautotrophicum)).